We begin with the raw amino-acid sequence, 408 residues long: Putative transporter AmpG 2 (408 aa).

12 helical membrane-spanning segments follow: residues 11–31 (IFNI…YLLT), 49–69 (IGLF…GPLL), 84–104 (YCLV…TSFN), 110–130 (TPFV…DMLI), 154–174 (FRIG…IISW), 177–197 (VYRT…FYPL), 224–244 (WIVI…LSIM), 261–281 (IGYK…GGFL), 294–311 (VLIY…LYFL), 315–337 (IISL…SPFF), 353–373 (IALI…ISGY), and 382–402 (YFFI…LYLP).

It belongs to the major facilitator superfamily.

The protein resides in the cell inner membrane. The chain is Putative transporter AmpG 2 (ampG2) from Rickettsia typhi (strain ATCC VR-144 / Wilmington).